Here is a 426-residue protein sequence, read N- to C-terminus: Interferon regulatory factor 8 (426 aa).

The segment at residues 7-114 is a DNA-binding region (IRF tryptophan pentad repeat); the sequence is GRRLRQWLIE…EPYKVYRIVP (108 aa).

The protein belongs to the IRF family. In terms of assembly, interacts (via C-terminus) with TRIM21 (via C-terminus). Interacts with the BATF-JUNB heterodimer. Interacts with BATF (via bZIP domain); the interaction is direct. Interacts with COPS2. Interacts with SPI1. In terms of processing, ubiquitinated. Ubiquitination by TRIM21 in macrophages, a process that is strongly increased upon interferon gamma stimulation, leds to the enhanced transcriptional activity of target cytokine genes. Ubiquitination leads to its degradation by the proteasome. Post-translationally, sumoylated with SUMO3. Desumoylated by SENP1. Predominantly expressed in lymphoid tissues.

The protein localises to the nucleus. The protein resides in the cytoplasm. Functionally, transcription factor that specifically binds to the upstream regulatory region of type I interferon (IFN) and IFN-inducible MHC class I genes (the interferon consensus sequence (ICS)). Can both act as a transcriptional activator or repressor. Plays a negative regulatory role in cells of the immune system. Involved in CD8(+) dendritic cell differentiation by forming a complex with the BATF-JUNB heterodimer in immune cells, leading to recognition of AICE sequence (5'-TGAnTCA/GAAA-3'), an immune-specific regulatory element, followed by cooperative binding of BATF and IRF8 and activation of genes. Required for the development of plasmacytoid dendritic cells (pDCs), which produce most of the type I IFN in response to viral infection. Positively regulates macroautophagy in dendritic cells. Acts as a transcriptional repressor of osteoclast differentiation factors such as NFATC1 and EEIG1. This Homo sapiens (Human) protein is Interferon regulatory factor 8.